Reading from the N-terminus, the 243-residue chain is Small ribosomal subunit protein uS3 (243 aa).

Positions Ile39–Glu110 constitute a KH type-2 domain. A disordered region spans residues Gln216–Ser243. The span at Gln233 to Ser243 shows a compositional bias: basic and acidic residues.

Belongs to the universal ribosomal protein uS3 family. Part of the 30S ribosomal subunit. Forms a tight complex with proteins S10 and S14.

In terms of biological role, binds the lower part of the 30S subunit head. Binds mRNA in the 70S ribosome, positioning it for translation. The polypeptide is Small ribosomal subunit protein uS3 (Prochlorococcus marinus (strain AS9601)).